Reading from the N-terminus, the 75-residue chain is DNA-directed RNA polymerase subunit omega (75 aa).

This sequence belongs to the RNA polymerase subunit omega family. In cyanobacteria the RNAP catalytic core is composed of 2 alpha, 1 beta, 1 beta', 1 gamma and 1 omega subunit. When a sigma factor is associated with the core the holoenzyme is formed, which can initiate transcription.

It carries out the reaction RNA(n) + a ribonucleoside 5'-triphosphate = RNA(n+1) + diphosphate. Its function is as follows. Promotes RNA polymerase assembly. Latches the N- and C-terminal regions of the beta' subunit thereby facilitating its interaction with the beta and alpha subunits. The chain is DNA-directed RNA polymerase subunit omega from Cyanothece sp. (strain PCC 7425 / ATCC 29141).